The following is a 215-amino-acid chain: LexA repressor (215 aa).

The segment at residues 29 to 49 (VREICSAVGFKSTSTVHSYLQ) is a DNA-binding region (H-T-H motif). Active-site for autocatalytic cleavage activity residues include Ser-138 and Lys-175.

Belongs to the peptidase S24 family. Homodimer.

The enzyme catalyses Hydrolysis of Ala-|-Gly bond in repressor LexA.. Its function is as follows. Represses a number of genes involved in the response to DNA damage (SOS response), including recA and lexA. In the presence of single-stranded DNA, RecA interacts with LexA causing an autocatalytic cleavage which disrupts the DNA-binding part of LexA, leading to derepression of the SOS regulon and eventually DNA repair. This is LexA repressor from Ruminiclostridium cellulolyticum (strain ATCC 35319 / DSM 5812 / JCM 6584 / H10) (Clostridium cellulolyticum).